The sequence spans 449 residues: Protein tweety homolog 1 (449 aa).

Over 1–43 the chain is Extracellular; that stretch reads MSSSHGYRASWWTYILHQVPHTNFQFEVVDNQFAPQEWPYQQA. The chain crosses the membrane as a helical span at residues 44 to 64; the sequence is LLFLASIAGLCLAISLILICV. Residues 65 to 86 lie on the Cytoplasmic side of the membrane; that stretch reads YLIRFCCCSSQEDDDSKSHRVC. Residues 87 to 107 form a helical membrane-spanning segment; that stretch reads CVTWSCVAAVIICCAGIGIGF. The Extracellular segment spans residues 108–212; it reads YGNSETNDGV…QVNFIEDYRW (105 aa). Asn-128 carries N-linked (GlcNAc...) asparagine glycosylation. Residues 213-233 traverse the membrane as a helical segment; the sequence is LAYILLLLLDLIICLFTLLGL. Over 234 to 238 the chain is Cytoplasmic; the sequence is AKQIK. The chain crosses the membrane as a helical span at residues 239–259; sequence WLVIVMTVVSFFVLLLSWGSM. The Extracellular portion of the chain corresponds to 260–388; it reads GLEMATAVGL…LKGLCYDGME (129 aa). Disulfide bonds link Cys-273-Cys-383 and Cys-301-Cys-368. N-linked (GlcNAc...) asparagine glycans are attached at residues Asn-282 and Asn-353. Residues 389-409 form a helical membrane-spanning segment; the sequence is GILFLLLFSFLSALSFTAAIC. Topologically, residues 410–449 are cytoplasmic; it reads SLPRAWKRFQNRDLDYDDMDEDDPFNPQESKRFVQWQSSI.

This sequence belongs to the tweety family. In terms of assembly, homotetramer; disulfide-linked. Homodimer.

It is found in the cell membrane. The enzyme catalyses chloride(in) = chloride(out). It carries out the reaction L-glutamate(out) = L-glutamate(in). Functionally, may act as a calcium-independent, swelling-dependent volume-regulated anion channel (VRAC-swell) which plays a pivotal role in the process of regulatory volume decrease (RVD) in the brain through the efflux of anions like chloride and organic osmolytes like glutamate. The protein is Protein tweety homolog 1 (ttyh1) of Xenopus tropicalis (Western clawed frog).